We begin with the raw amino-acid sequence, 207 residues long: MQNSDSGKKTFLIGITGMIGGGKSTATKILEEMGCFGINADRLAKRYTEPDSPILIELVELLGSEILDEQGKPDRKKISEIVFNNPEKLSRLNQLIHPLVRKDFQKILETTAKGKMVIWEVPLLFETDAYTLCDATVTVDSDPEESILRTISRDKVKKEDVLARIKNQLPLTEKLKRADYILRNRGNIDSLREECKSLYSTLLGKML.

A DPCK domain is found at 12 to 207 (LIGITGMIGG…LYSTLLGKML (196 aa)). Residue 20–25 (GGGKST) participates in ATP binding.

The protein belongs to the CoaE family.

It localises to the cytoplasm. It carries out the reaction 3'-dephospho-CoA + ATP = ADP + CoA + H(+). Its pathway is cofactor biosynthesis; coenzyme A biosynthesis; CoA from (R)-pantothenate: step 5/5. In terms of biological role, catalyzes the phosphorylation of the 3'-hydroxyl group of dephosphocoenzyme A to form coenzyme A. The protein is Dephospho-CoA kinase of Leptospira interrogans serogroup Icterohaemorrhagiae serovar Lai (strain 56601).